Here is a 192-residue protein sequence, read N- to C-terminus: Peptidyl-tRNA hydrolase (192 aa).

Residue Y14 participates in tRNA binding. The active-site Proton acceptor is H19. Positions 64, 66, and 112 each coordinate tRNA.

The protein belongs to the PTH family. Monomer.

Its subcellular location is the cytoplasm. It carries out the reaction an N-acyl-L-alpha-aminoacyl-tRNA + H2O = an N-acyl-L-amino acid + a tRNA + H(+). Functionally, hydrolyzes ribosome-free peptidyl-tRNAs (with 1 or more amino acids incorporated), which drop off the ribosome during protein synthesis, or as a result of ribosome stalling. In terms of biological role, catalyzes the release of premature peptidyl moieties from peptidyl-tRNA molecules trapped in stalled 50S ribosomal subunits, and thus maintains levels of free tRNAs and 50S ribosomes. This chain is Peptidyl-tRNA hydrolase, found in Anaeromyxobacter dehalogenans (strain 2CP-C).